Consider the following 67-residue polypeptide: Large ribosomal subunit protein bL32 (67 aa).

Positions 1-19 (MAVPKRKMSRSNTRARRSQ) are enriched in basic residues. Positions 1 to 21 (MAVPKRKMSRSNTRARRSQWK) are disordered.

The protein belongs to the bacterial ribosomal protein bL32 family.

This Clavibacter sepedonicus (Clavibacter michiganensis subsp. sepedonicus) protein is Large ribosomal subunit protein bL32.